The following is a 159-amino-acid chain: Na(+)/H(+) antiporter subunit E1 (159 aa).

Helical transmembrane passes span Met-1–Ser-21, Phe-27–Gly-47, Phe-49–Ile-69, and Trp-101–Val-121.

The protein belongs to the CPA3 antiporters (TC 2.A.63) subunit E family. As to quaternary structure, may form a heterooligomeric complex that consists of seven subunits: mnhA1, mnhB1, mnhC1, mnhD1, mnhE1, mnhF1 and mnhG1.

It localises to the cell membrane. Mnh complex is a Na(+)/H(+) antiporter involved in Na(+) excretion. In Staphylococcus aureus (strain Mu3 / ATCC 700698), this protein is Na(+)/H(+) antiporter subunit E1 (mnhE1).